The primary structure comprises 582 residues: Aspartate--tRNA ligase (582 aa).

Glu174 is an L-aspartate binding site. The tract at residues 198-201 (QITK) is aspartate. Residue Arg220 participates in L-aspartate binding. Residues 220 to 222 (RDE) and Gln229 contribute to the ATP site. An L-aspartate-binding site is contributed by His443. ATP is bound at residue Glu477. L-aspartate is bound at residue Arg484. 529–532 (GLDR) contributes to the ATP binding site.

It belongs to the class-II aminoacyl-tRNA synthetase family. Type 1 subfamily. As to quaternary structure, homodimer.

The protein resides in the cytoplasm. The catalysed reaction is tRNA(Asp) + L-aspartate + ATP = L-aspartyl-tRNA(Asp) + AMP + diphosphate. Catalyzes the attachment of L-aspartate to tRNA(Asp) in a two-step reaction: L-aspartate is first activated by ATP to form Asp-AMP and then transferred to the acceptor end of tRNA(Asp). The protein is Aspartate--tRNA ligase of Streptococcus pyogenes serotype M3 (strain ATCC BAA-595 / MGAS315).